Here is a 90-residue protein sequence, read N- to C-terminus: Putative sodium channel toxin Ts35 (90 aa).

A signal peptide spans 1-22; the sequence is QDEVGLGSCSVIFVVGNEEGEA. An LCN-type CS-alpha/beta domain is found at 23-87; the sequence is KDGYAVGGDR…WGNPTLGPCL (65 aa). 4 disulfide bridges follow: C33/C86, C37/C61, C46/C66, and C50/C68.

The protein belongs to the long (4 C-C) scorpion toxin superfamily. Sodium channel inhibitor family. In terms of tissue distribution, expressed by the venom gland.

It is found in the secreted. Its function is as follows. Putative sodium channel toxin. The polypeptide is Putative sodium channel toxin Ts35 (Tityus serrulatus (Brazilian scorpion)).